Consider the following 263-residue polypeptide: Troponin T, fast skeletal muscle isoforms (263 aa).

Acidic residues predominate over residues 1–26 (MSDTEEVEHGEEEYEEEAHEAEEVHE). Disordered stretches follow at residues 1–66 (MSDT…FDDI), 107–188 (RAER…VLAE), and 243–263 (DQAQ…GRWK). N-acetylserine is present on Ser2. 3 stretches are compositionally biased toward basic and acidic residues: residues 56 to 66 (PEGEKVDFDDI), 107 to 149 (RAER…DDLK), and 177 to 188 (TARETKKKVLAE). Positions 247 to 263 (KHSKKAGAKGKVGGRWK) are enriched in basic residues.

It belongs to the troponin T family.

In terms of biological role, troponin T is the tropomyosin-binding subunit of troponin, the thin filament regulatory complex which confers calcium-sensitivity to striated muscle actomyosin ATPase activity. This chain is Troponin T, fast skeletal muscle isoforms (TNNT3), found in Gallus gallus (Chicken).